The primary structure comprises 483 residues: Serralysin (483 aa).

Zn(2+) is bound at residue histidine 184. Glutamate 185 is a catalytic residue. Zn(2+)-binding residues include histidine 188 and histidine 194. Positions 263, 266, 295, 297, 298, 300, 337, and 339 each coordinate Ca(2+). 2 Hemolysin-type calcium-binding repeats span residues isoleucine 342–leucine 359 and lysine 360–leucine 377.

This sequence belongs to the peptidase M10B family. It depends on Zn(2+) as a cofactor. Ca(2+) serves as cofactor.

It is found in the secreted. The catalysed reaction is Preferential cleavage of bonds with hydrophobic residues in P1'.. With respect to regulation, inhibited by 8 mM 1,10-phenanthroline and 10 mM EDTA, but not by PMSF. Involved in the inhibition of insect antibacterial peptides. Reduces the antibacterial activity of G.mellonella hemolymph by 50%. Reduces the antibacterial activity of cecropin A by 80% and cecropin B by 75%. The chain is Serralysin from Photorhabdus sp. (strain Az29).